A 106-amino-acid chain; its full sequence is uncharacterized protein (106 aa).

An N-terminal signal peptide occupies residues 1 to 31; the sequence is MKKKTKIILSLLAALIVILIVLPVLSPVVFT.

This is an uncharacterized protein from Bacillus subtilis (strain 168).